The chain runs to 380 residues: uncharacterized protein (380 aa).

The stretch at D256–P301 forms a coiled coil.

This is an uncharacterized protein from Pasteurella multocida (strain Pm70).